Consider the following 363-residue polypeptide: UDP-N-acetylglucosamine--N-acetylmuramyl-(pentapeptide) pyrophosphoryl-undecaprenol N-acetylglucosamine transferase (363 aa).

UDP-N-acetyl-alpha-D-glucosamine is bound by residues 12–14 (TAG), Ser196, and Gln291.

The protein belongs to the glycosyltransferase 28 family. MurG subfamily.

The protein resides in the cell inner membrane. The catalysed reaction is di-trans,octa-cis-undecaprenyl diphospho-N-acetyl-alpha-D-muramoyl-L-alanyl-D-glutamyl-meso-2,6-diaminopimeloyl-D-alanyl-D-alanine + UDP-N-acetyl-alpha-D-glucosamine = di-trans,octa-cis-undecaprenyl diphospho-[N-acetyl-alpha-D-glucosaminyl-(1-&gt;4)]-N-acetyl-alpha-D-muramoyl-L-alanyl-D-glutamyl-meso-2,6-diaminopimeloyl-D-alanyl-D-alanine + UDP + H(+). It participates in cell wall biogenesis; peptidoglycan biosynthesis. Its function is as follows. Cell wall formation. Catalyzes the transfer of a GlcNAc subunit on undecaprenyl-pyrophosphoryl-MurNAc-pentapeptide (lipid intermediate I) to form undecaprenyl-pyrophosphoryl-MurNAc-(pentapeptide)GlcNAc (lipid intermediate II). The polypeptide is UDP-N-acetylglucosamine--N-acetylmuramyl-(pentapeptide) pyrophosphoryl-undecaprenol N-acetylglucosamine transferase (Legionella pneumophila (strain Corby)).